A 545-amino-acid chain; its full sequence is CTP synthase (545 aa).

Residues 1-266 (MTTNYIFVTG…DDYICKRFSL (266 aa)) form an amidoligase domain region. S14 contacts CTP. S14 lines the UTP pocket. ATP is bound by residues 15–20 (SLGKGI) and D72. The Mg(2+) site is built by D72 and E140. CTP is bound by residues 147-149 (DIE), 187-192 (KTKPTQ), and K223. Residues 187 to 192 (KTKPTQ) and K223 contribute to the UTP site. 239–241 (KDV) is an ATP binding site. In terms of domain architecture, Glutamine amidotransferase type-1 spans 291–542 (TIGMVGKYIE…VKAASEHQKR (252 aa)). G352 is an L-glutamine binding site. The Nucleophile; for glutamine hydrolysis role is filled by C379. L-glutamine-binding positions include 380-383 (LGMQ), E403, and R470. Active-site residues include H515 and E517.

The protein belongs to the CTP synthase family. In terms of assembly, homotetramer.

It catalyses the reaction UTP + L-glutamine + ATP + H2O = CTP + L-glutamate + ADP + phosphate + 2 H(+). The catalysed reaction is L-glutamine + H2O = L-glutamate + NH4(+). It carries out the reaction UTP + NH4(+) + ATP = CTP + ADP + phosphate + 2 H(+). Its pathway is pyrimidine metabolism; CTP biosynthesis via de novo pathway; CTP from UDP: step 2/2. Its activity is regulated as follows. Allosterically activated by GTP, when glutamine is the substrate; GTP has no effect on the reaction when ammonia is the substrate. The allosteric effector GTP functions by stabilizing the protein conformation that binds the tetrahedral intermediate(s) formed during glutamine hydrolysis. Inhibited by the product CTP, via allosteric rather than competitive inhibition. Functionally, catalyzes the ATP-dependent amination of UTP to CTP with either L-glutamine or ammonia as the source of nitrogen. Regulates intracellular CTP levels through interactions with the four ribonucleotide triphosphates. The protein is CTP synthase of Salmonella arizonae (strain ATCC BAA-731 / CDC346-86 / RSK2980).